Reading from the N-terminus, the 146-residue chain is Neuropeptide Y receptor type 2 (146 aa).

Residues 1 to 8 lie on the Extracellular side of the membrane; sequence KMGPVLCH. Cysteines 7 and 87 form a disulfide. The helical transmembrane segment at 9 to 29 threads the bilayer; sequence LVPYAQGLAVQVSTITLTVIA. Residues 30–49 lie on the Cytoplasmic side of the membrane; sequence LDRHRCIVYHLESKISKQIS. A helical membrane pass occupies residues 50 to 70; it reads FLIIGLAWGVSALLASPLAIF. The Extracellular segment spans residues 71–100; sequence REYSLIEIIPDFEIVACTEKWPGEEKGIYG. A helical membrane pass occupies residues 101 to 121; the sequence is TVYSLLSLLILYVLPLGIISF. Topologically, residues 122-146 are cytoplasmic; sequence SYARIWSKLKNHVSPGAAHDHYHQR.

It belongs to the G-protein coupled receptor 1 family.

It is found in the cell membrane. Receptor for neuropeptide Y and peptide YY. The sequence is that of Neuropeptide Y receptor type 2 (NPY2R) from Ovis aries (Sheep).